A 423-amino-acid chain; its full sequence is tRNA(Ile)-lysidine synthase (423 aa).

Ser-18–Ser-23 is a binding site for ATP.

Belongs to the tRNA(Ile)-lysidine synthase family.

It localises to the cytoplasm. The catalysed reaction is cytidine(34) in tRNA(Ile2) + L-lysine + ATP = lysidine(34) in tRNA(Ile2) + AMP + diphosphate + H(+). In terms of biological role, ligates lysine onto the cytidine present at position 34 of the AUA codon-specific tRNA(Ile) that contains the anticodon CAU, in an ATP-dependent manner. Cytidine is converted to lysidine, thus changing the amino acid specificity of the tRNA from methionine to isoleucine. This Aromatoleum aromaticum (strain DSM 19018 / LMG 30748 / EbN1) (Azoarcus sp. (strain EbN1)) protein is tRNA(Ile)-lysidine synthase.